The following is a 281-amino-acid chain: MSRHVAIVTDSTAYLPARAMERHGITAVPLTVVLGDRALEEGTEISTRSLAQALQKRRPVTTSRPNPELFAETYRRIAESGADGIVSLHLSAELSGTHDAAVVAAREAPVPVRVVDTGMIAMALGFCALAAAETAEAGGTVDEAVTAAEKRAAGTSAYFYVDTLDYLRRGGRIGAAQALFGSALAVKPLLQLEGGRIEPLEKVRTASKAIARLEEIAADRAGGAPVDIAVHHLAAPDRASALADRLRDRVPGLADLHVSEVGAVIGAHTGPGLLGVVVSSR.

Residues 5 to 280 (VAIVTDSTAY…PGLLGVVVSS (276 aa)) form the DegV domain. Positions 62 and 95 each coordinate hexadecanoate.

In terms of biological role, may bind long-chain fatty acids, such as palmitate, and may play a role in lipid transport or fatty acid metabolism. This chain is DegV domain-containing protein SCO2569, found in Streptomyces coelicolor (strain ATCC BAA-471 / A3(2) / M145).